The primary structure comprises 445 residues: 3-phosphoshikimate 1-carboxyvinyltransferase (445 aa).

Residues 1-25 are disordered; it reads MSGHGPAQPMTARRSGPLKGRAEIP. 3-phosphoshikimate-binding residues include K28, S29, and R33. A phosphoenolpyruvate-binding site is contributed by K28. G101 and R129 together coordinate phosphoenolpyruvate. Residues S174, Q176, D326, and K353 each contribute to the 3-phosphoshikimate site. Q176 contributes to the phosphoenolpyruvate binding site. D326 (proton acceptor) is an active-site residue. Residues R357 and R400 each contribute to the phosphoenolpyruvate site.

The protein belongs to the EPSP synthase family. As to quaternary structure, monomer.

It localises to the cytoplasm. The catalysed reaction is 3-phosphoshikimate + phosphoenolpyruvate = 5-O-(1-carboxyvinyl)-3-phosphoshikimate + phosphate. It participates in metabolic intermediate biosynthesis; chorismate biosynthesis; chorismate from D-erythrose 4-phosphate and phosphoenolpyruvate: step 6/7. Catalyzes the transfer of the enolpyruvyl moiety of phosphoenolpyruvate (PEP) to the 5-hydroxyl of shikimate-3-phosphate (S3P) to produce enolpyruvyl shikimate-3-phosphate and inorganic phosphate. In Cereibacter sphaeroides (strain ATCC 17029 / ATH 2.4.9) (Rhodobacter sphaeroides), this protein is 3-phosphoshikimate 1-carboxyvinyltransferase.